The following is a 444-amino-acid chain: Acyl-CoA 6-desaturase (444 aa).

The Cytoplasmic segment spans residues Met1–Pro130. The 78-residue stretch at Phe18 to Glu95 folds into the Cytochrome b5 heme-binding domain. The helical transmembrane segment at Leu131 to Val151 threads the bilayer. Over Trp152–Gly157 the chain is Lumenal. The chain crosses the membrane as a helical span at residues Trp158–Leu178. The Cytoplasmic portion of the chain corresponds to Gln179–Lys264. Positions His180–His184 match the Histidine box-1 motif. Residues His217 to His221 carry the Histidine box-2 motif. The chain crosses the membrane as a helical span at residues Tyr265–His285. At Asn286–Arg305 the chain is on the lumenal side. The helical transmembrane segment at Tyr306–Val326 threads the bilayer. At Arg327–Lys444 the chain is on the cytoplasmic side. The short motif at Gln382–His386 is the Histidine box-3 element.

The protein belongs to the fatty acid desaturase type 1 family.

It is found in the endoplasmic reticulum membrane. The catalysed reaction is (9Z,12Z)-octadecadienoyl-CoA + 2 Fe(II)-[cytochrome b5] + O2 + 2 H(+) = (6Z,9Z,12Z)-octadecatrienoyl-CoA + 2 Fe(III)-[cytochrome b5] + 2 H2O. It carries out the reaction (9Z,12Z,15Z)-octadecatrienoyl-CoA + 2 Fe(II)-[cytochrome b5] + O2 + 2 H(+) = (6Z,9Z,12Z,15Z)-octadecatetraenoyl-CoA + 2 Fe(III)-[cytochrome b5] + 2 H2O. It catalyses the reaction (8Z,11Z,14Z,17Z)-eicosatetraenoyl-CoA + 2 Fe(II)-[cytochrome b5] + O2 + 2 H(+) = (5Z,8Z,11Z,14Z,17Z)-eicosapentaenoyl-CoA + 2 Fe(III)-[cytochrome b5] + 2 H2O. The enzyme catalyses (8Z,11Z,14Z)-eicosatrienoyl-CoA + 2 Fe(II)-[cytochrome b5] + O2 + 2 H(+) = (5Z,8Z,11Z,14Z)-eicosatetraenoyl-CoA + 2 Fe(III)-[cytochrome b5] + 2 H2O. It functions in the pathway lipid metabolism; polyunsaturated fatty acid biosynthesis. Functionally, fatty acid desaturase with bifunctional delta-5 and delta-6 activities. Component of a lipid metabolic pathway that catalyzes the biosynthesis of polyunsaturated fatty acids (PUFA) with preference toward n-3 substrates and Delta-6 function. The sequence is that of Acyl-CoA 6-desaturase (fads2) from Danio rerio (Zebrafish).